A 329-amino-acid chain; its full sequence is DNA-directed RNA polymerase subunit alpha (329 aa).

The tract at residues 1–235 (MQGSVTEFLK…EQLEAFVDLR (235 aa)) is alpha N-terminal domain (alpha-NTD). Residues 249-329 (FDPILLRPVD…NWPPASIADE (81 aa)) form an alpha C-terminal domain (alpha-CTD) region.

The protein belongs to the RNA polymerase alpha chain family. As to quaternary structure, homodimer. The RNAP catalytic core consists of 2 alpha, 1 beta, 1 beta' and 1 omega subunit. When a sigma factor is associated with the core the holoenzyme is formed, which can initiate transcription.

It carries out the reaction RNA(n) + a ribonucleoside 5'-triphosphate = RNA(n+1) + diphosphate. DNA-dependent RNA polymerase catalyzes the transcription of DNA into RNA using the four ribonucleoside triphosphates as substrates. This is DNA-directed RNA polymerase subunit alpha from Photorhabdus laumondii subsp. laumondii (strain DSM 15139 / CIP 105565 / TT01) (Photorhabdus luminescens subsp. laumondii).